Here is a 123-residue protein sequence, read N- to C-terminus: WAP four-disulfide core domain protein 5 (123 aa).

The N-terminal stretch at 1 to 24 (MRIQSLLLLGALLAVGSQLPAVFG) is a signal peptide. 2 WAP domains span residues 27 to 73 (KGEK…CVPR) and 74 to 121 (VSVK…RDPA). Intrachain disulfides connect cysteine 34/cysteine 62, cysteine 41/cysteine 66, cysteine 49/cysteine 61, cysteine 55/cysteine 70, cysteine 81/cysteine 109, cysteine 88/cysteine 113, cysteine 96/cysteine 108, and cysteine 102/cysteine 117.

It is found in the secreted. Its function is as follows. Putative acid-stable proteinase inhibitor. This Pongo abelii (Sumatran orangutan) protein is WAP four-disulfide core domain protein 5 (WFDC5).